The primary structure comprises 264 residues: 4-oxalocrotonate decarboxylase (264 aa).

The protein belongs to the hydratase/decarboxylase family.

It catalyses the reaction (3E)-2-oxohex-3-enedioate + H(+) = 2-oxopent-4-enoate + CO2. The protein operates within xenobiotic degradation; toluene degradation. This is 4-oxalocrotonate decarboxylase (xylI) from Pseudomonas putida (Arthrobacter siderocapsulatus).